A 1732-amino-acid chain; its full sequence is Serine/threonine-protein kinase MRCK alpha (1732 aa).

A Protein kinase domain is found at Phe-77–Phe-343. Residues Ile-83–Val-91 and Lys-106 each bind ATP. Asp-201 serves as the catalytic Proton acceptor. 2 positions are modified to phosphoserine; by autocatalysis: Ser-222 and Ser-234. Residue Thr-240 is modified to Phosphothreonine; by autocatalysis. The AGC-kinase C-terminal domain maps to Ser-344 to Ser-414. 2 coiled-coil regions span residues Asn-437–Gln-820 and Leu-880–Gly-943. The segment at Glu-968–Ser-1003 is disordered. Residues Thr-1012 to Cys-1062 form a Phorbol-ester/DAG-type zinc finger. The 120-residue stretch at Gly-1082–Lys-1201 folds into the PH domain. Phosphoserine is present on Ser-1127. In terms of domain architecture, CNH spans Ile-1227–Asn-1499. At Ser-1545 the chain carries Phosphoserine. One can recognise a CRIB domain in the interval Ile-1571–Gly-1584. Residues Ile-1591 to Pro-1732 form a disordered region. The span at Ser-1604 to Lys-1619 shows a compositional bias: polar residues. Phosphoserine is present on residues Ser-1611, Ser-1613, Ser-1629, Ser-1651, Ser-1664, Ser-1669, and Ser-1693. A compositionally biased stretch (low complexity) spans Gly-1625–Ala-1640. The span at Pro-1665–Gly-1674 shows a compositional bias: low complexity. The segment covering Ser-1697–Ser-1707 has biased composition (low complexity). 2 positions are modified to phosphoserine: Ser-1719 and Ser-1721.

This sequence belongs to the protein kinase superfamily. AGC Ser/Thr protein kinase family. DMPK subfamily. As to quaternary structure, homodimer and homotetramer via the coiled coil regions. Interacts tightly with GTP-bound but not GDP-bound CDC42. Forms a tripartite complex with MYO18A and LURAP1 with the latter acting as an adapter connecting CDC42BPA and MYO18A. LURAP1 binding results in activation of CDC42BPA by abolition of its negative autoregulation. Interacts with LURAP1. Interacts (via AGC-kinase C-terminal domain) with FAM89B/LRAP25 (via LRR repeat). Forms a tripartite complex with FAM89B/LRAP25 and LIMK1. The cofactor is Mg(2+). Proteolytically cleaved by caspases upon apoptosis induction. The cleavage at Asp-478 by CASP3 increases its kinase activity (in vitro). Abundant in the heart, brain, skeletal muscle, kidney, and pancreas, with little or no expression in the lung and liver.

The protein localises to the cytoplasm. It is found in the cell projection. It localises to the lamellipodium. The catalysed reaction is L-seryl-[protein] + ATP = O-phospho-L-seryl-[protein] + ADP + H(+). It catalyses the reaction L-threonyl-[protein] + ATP = O-phospho-L-threonyl-[protein] + ADP + H(+). Maintained in an inactive, closed conformation by an interaction between the kinase domain and the negative autoregulatory C-terminal coiled-coil region. Agonist binding to the phorbol ester binding site disrupts this, releasing the kinase domain to allow N-terminus-mediated dimerization and kinase activation by transautophosphorylation. Inhibited by chelerythrine chloride. Functionally, serine/threonine-protein kinase which is an important downstream effector of CDC42 and plays a role in the regulation of cytoskeleton reorganization and cell migration. Regulates actin cytoskeletal reorganization via phosphorylation of PPP1R12C and MYL9/MLC2. In concert with MYO18A and LURAP1, is involved in modulating lamellar actomyosin retrograde flow that is crucial to cell protrusion and migration. Phosphorylates: PPP1R12A, LIMK1 and LIMK2. May play a role in TFRC-mediated iron uptake. In concert with FAM89B/LRAP25 mediates the targeting of LIMK1 to the lamellipodium resulting in its activation and subsequent phosphorylation of CFL1 which is important for lamellipodial F-actin regulation. Triggers the formation of an extrusion apical actin ring required for epithelial extrusion of apoptotic cells. The protein is Serine/threonine-protein kinase MRCK alpha of Homo sapiens (Human).